Here is a 300-residue protein sequence, read N- to C-terminus: Ribosomal protein L11 methyltransferase (300 aa).

T152, G173, D195, and N234 together coordinate S-adenosyl-L-methionine.

It belongs to the methyltransferase superfamily. PrmA family.

It localises to the cytoplasm. The catalysed reaction is L-lysyl-[protein] + 3 S-adenosyl-L-methionine = N(6),N(6),N(6)-trimethyl-L-lysyl-[protein] + 3 S-adenosyl-L-homocysteine + 3 H(+). Functionally, methylates ribosomal protein L11. The chain is Ribosomal protein L11 methyltransferase from Burkholderia vietnamiensis (strain G4 / LMG 22486) (Burkholderia cepacia (strain R1808)).